The sequence spans 358 residues: Glutamine synthetase (358 aa).

The 80-residue stretch at 26 to 105 (ILAEYIWIDG…VLAECWNADG (80 aa)) folds into the GS beta-grasp domain. The 247-residue stretch at 112 to 358 (HRHECAKIME…IMMETICGGI (247 aa)) folds into the GS catalytic domain.

It belongs to the glutamine synthetase family. As to quaternary structure, homooctamer.

It is found in the cytoplasm. The catalysed reaction is L-glutamate + NH4(+) + ATP = L-glutamine + ADP + phosphate + H(+). The chain is Glutamine synthetase (GLN1) from Tuber borchii (White truffle).